The chain runs to 391 residues: MAKAKFERNKPHVNIGTIGHVDHGKTTLTAAITKYFGEFRAYDQIDGAPEERARGITISTAHVEYESESRHYAHVDCPGHADYVKNMITGAAQMDGAILVVNAADGPMPQTREHILLGRQVGIPYMVVYMNKVDQVDDPELLELVEMEIRELLSSYDYPGDDIPIIKGSALAAMNGTDKEIGEDSIRALIAAVDEYIPTPARAVDQPFLMPVEDVFSISGRGTVATGRIERGVVKVGEELEIVGIRPSKKTVCTGVEMFRKLLDQGEAGDNVGLLLRGVDRDGIERGQVLCKPGSVKPHTKFEAEAYILTKEEGGRHTPFFANYRPQFYFRTTDVTGTVELPEGTEMVMPGDNLKFNVELIAPIAMEEKLRFAIREGGRTVGAGVVSKIIA.

Positions 10–201 (KPHVNIGTIG…AVDEYIPTPA (192 aa)) constitute a tr-type G domain. The tract at residues 19–26 (GHVDHGKT) is G1. 19–26 (GHVDHGKT) lines the GTP pocket. Thr-26 provides a ligand contact to Mg(2+). Residues 55–59 (GITIS) form a G2 region. Residues 76 to 79 (DCPG) form a G3 region. GTP is bound by residues 76-80 (DCPGH) and 131-134 (NKVD). The segment at 131 to 134 (NKVD) is G4. The interval 169-171 (SAL) is G5.

Belongs to the TRAFAC class translation factor GTPase superfamily. Classic translation factor GTPase family. EF-Tu/EF-1A subfamily. In terms of assembly, monomer.

It is found in the cytoplasm. The catalysed reaction is GTP + H2O = GDP + phosphate + H(+). GTP hydrolase that promotes the GTP-dependent binding of aminoacyl-tRNA to the A-site of ribosomes during protein biosynthesis. The polypeptide is Elongation factor Tu (Cereibacter sphaeroides (strain ATCC 17025 / ATH 2.4.3) (Rhodobacter sphaeroides)).